Here is a 197-residue protein sequence, read N- to C-terminus: Beta-crystallin A2 (197 aa).

The segment at 1-11 is N-terminal arm; the sequence is MSGTLSQGSSP. 2 consecutive Beta/gamma crystallin 'Greek key' domains span residues 12–52 and 53–99; these read ARLT…KVES and GAWV…RPLL. Residues 100–105 form a connecting peptide region; that stretch reads CANHSD. 2 Beta/gamma crystallin 'Greek key' domains span residues 106–147 and 148–196; these read SRVT…KVTS and GAWV…RRVQ.

It belongs to the beta/gamma-crystallin family. As to quaternary structure, homo/heterodimer, or complexes of higher-order. The structure of beta-crystallin oligomers seems to be stabilized through interactions between the N-terminal arms.

Functionally, crystallins are the dominant structural components of the vertebrate eye lens. This chain is Beta-crystallin A2 (CRYBA2), found in Macropus fuliginosus (Western gray kangaroo).